The following is a 431-amino-acid chain: Glutamate--tRNA ligase 1 (431 aa).

Residues P6 to N16 carry the 'HIGH' region motif. The short motif at K235–R239 is the 'KMSKS' region element. Residue K238 coordinates ATP.

The protein belongs to the class-I aminoacyl-tRNA synthetase family. Glutamate--tRNA ligase type 1 subfamily. Monomer.

Its subcellular location is the cytoplasm. The enzyme catalyses tRNA(Glu) + L-glutamate + ATP = L-glutamyl-tRNA(Glu) + AMP + diphosphate. In terms of biological role, catalyzes the attachment of glutamate to tRNA(Glu) in a two-step reaction: glutamate is first activated by ATP to form Glu-AMP and then transferred to the acceptor end of tRNA(Glu). The sequence is that of Glutamate--tRNA ligase 1 from Campylobacter jejuni (strain RM1221).